We begin with the raw amino-acid sequence, 434 residues long: Serine hydroxymethyltransferase (434 aa).

Residues L131 and 135 to 137 (GHL) each bind (6S)-5,6,7,8-tetrahydrofolate. K240 carries the N6-(pyridoxal phosphate)lysine modification.

This sequence belongs to the SHMT family. Homodimer. Pyridoxal 5'-phosphate is required as a cofactor.

The protein localises to the cytoplasm. It carries out the reaction (6R)-5,10-methylene-5,6,7,8-tetrahydrofolate + glycine + H2O = (6S)-5,6,7,8-tetrahydrofolate + L-serine. The protein operates within one-carbon metabolism; tetrahydrofolate interconversion. Its pathway is amino-acid biosynthesis; glycine biosynthesis; glycine from L-serine: step 1/1. In terms of biological role, catalyzes the reversible interconversion of serine and glycine with tetrahydrofolate (THF) serving as the one-carbon carrier. This reaction serves as the major source of one-carbon groups required for the biosynthesis of purines, thymidylate, methionine, and other important biomolecules. Also exhibits THF-independent aldolase activity toward beta-hydroxyamino acids, producing glycine and aldehydes, via a retro-aldol mechanism. This Gluconobacter oxydans (strain 621H) (Gluconobacter suboxydans) protein is Serine hydroxymethyltransferase.